The chain runs to 247 residues: ATP synthase subunit a, chloroplastic (247 aa).

The next 5 helical transmembrane spans lie at 38–58 (QVLI…SIAV), 95–115 (VPFI…GALL), 134–154 (INTT…AGLS), 199–219 (LVVV…VMFL), and 220–240 (GLFT…AYIG).

It belongs to the ATPase A chain family. F-type ATPases have 2 components, CF(1) - the catalytic core - and CF(0) - the membrane proton channel. CF(1) has five subunits: alpha(3), beta(3), gamma(1), delta(1), epsilon(1). CF(0) has four main subunits: a, b, b' and c.

Its subcellular location is the plastid. It localises to the chloroplast thylakoid membrane. Key component of the proton channel; it plays a direct role in the translocation of protons across the membrane. The polypeptide is ATP synthase subunit a, chloroplastic (Oenothera argillicola (Appalachian evening primrose)).